An 88-amino-acid polypeptide reads, in one-letter code: Sec-independent protein translocase protein TatA (88 aa).

Residues 1–21 (MGGIGIWQLAIITVIVILLFG) form a helical membrane-spanning segment. The interval 46 to 88 (DNDKDSTQVDDKDSTQVDDNAKQPSNKKVEENIKEQSKEKDRA) is disordered.

This sequence belongs to the TatA/E family. In terms of assembly, the Tat system comprises two distinct complexes: a TatABC complex, containing multiple copies of TatA, TatB and TatC subunits, and a separate TatA complex, containing only TatA subunits. Substrates initially bind to the TatABC complex, which probably triggers association of the separate TatA complex to form the active translocon.

Its subcellular location is the cell inner membrane. Part of the twin-arginine translocation (Tat) system that transports large folded proteins containing a characteristic twin-arginine motif in their signal peptide across membranes. TatA could form the protein-conducting channel of the Tat system. The sequence is that of Sec-independent protein translocase protein TatA from Psychromonas ingrahamii (strain DSM 17664 / CCUG 51855 / 37).